A 430-amino-acid chain; its full sequence is 3-phosphoshikimate 1-carboxyvinyltransferase (430 aa).

Residues Lys23, Ser24, and Arg28 each contribute to the 3-phosphoshikimate site. Phosphoenolpyruvate is bound at residue Lys23. Phosphoenolpyruvate is bound by residues Gly95 and Arg123. Positions 169, 171, 315, and 342 each coordinate 3-phosphoshikimate. Residue Gln171 participates in phosphoenolpyruvate binding. Asp315 functions as the Proton acceptor in the catalytic mechanism. Positions 346 and 388 each coordinate phosphoenolpyruvate.

It belongs to the EPSP synthase family. Monomer.

The protein localises to the cytoplasm. The catalysed reaction is 3-phosphoshikimate + phosphoenolpyruvate = 5-O-(1-carboxyvinyl)-3-phosphoshikimate + phosphate. It functions in the pathway metabolic intermediate biosynthesis; chorismate biosynthesis; chorismate from D-erythrose 4-phosphate and phosphoenolpyruvate: step 6/7. In terms of biological role, catalyzes the transfer of the enolpyruvyl moiety of phosphoenolpyruvate (PEP) to the 5-hydroxyl of shikimate-3-phosphate (S3P) to produce enolpyruvyl shikimate-3-phosphate and inorganic phosphate. The polypeptide is 3-phosphoshikimate 1-carboxyvinyltransferase (Streptococcus pyogenes serotype M2 (strain MGAS10270)).